Here is an 837-residue protein sequence, read N- to C-terminus: Protein translocase subunit SecA 1 (837 aa).

Residues Gln-85, 103 to 107 (GEGKT), and Asp-492 contribute to the ATP site. Basic and acidic residues predominate over residues 787-806 (QEVAKGEAVHPKEDGEEPKR). A disordered region spans residues 787–811 (QEVAKGEAVHPKEDGEEPKRKPVRK). The Zn(2+) site is built by Cys-821, Cys-823, Cys-832, and Cys-833.

The protein belongs to the SecA family. Monomer and homodimer. Part of the essential Sec protein translocation apparatus which comprises SecA, SecYEG and auxiliary proteins SecDF. Other proteins may also be involved. It depends on Zn(2+) as a cofactor.

The protein resides in the cell membrane. Its subcellular location is the cytoplasm. The catalysed reaction is ATP + H2O + cellular proteinSide 1 = ADP + phosphate + cellular proteinSide 2.. In terms of biological role, part of the Sec protein translocase complex. Interacts with the SecYEG preprotein conducting channel. Has a central role in coupling the hydrolysis of ATP to the transfer of proteins into and across the cell membrane, serving as an ATP-driven molecular motor driving the stepwise translocation of polypeptide chains across the membrane. In Geobacillus kaustophilus (strain HTA426), this protein is Protein translocase subunit SecA 1.